A 993-amino-acid chain; its full sequence is Lateral signaling target protein 2 homolog (993 aa).

4 disordered regions span residues 340-449, 494-623, 759-813, and 825-902; these read DQRN…DTTD, DGYG…TVVQ, GARH…GDQE, and AVNE…PPAW. Residues 343–360 show a composition bias toward low complexity; the sequence is NNNNNINNNSSSSSNSNS. Residues 372–405 show a composition bias toward polar residues; that stretch reads RSPSMLSLSTASPTPSHSIGSTFSAATSSTNPPV. Residues 409–448 show a composition bias toward acidic residues; the sequence is DGDDADDDDDGDDDDEDDDDDVDDDLVGNDDSDDDDDDTT. A phosphoserine mark is found at serine 525 and serine 526. Residues 535–549 are compositionally biased toward polar residues; it reads SHNNTTTIKSPDSDG. Residues 559–608 show a composition bias toward basic residues; it reads SRQRHSHHHHRHHHHHHRHSSHSSHSHHHQHQQHHSQPHPHRTTRSGRKR. Positions 759–801 are enriched in low complexity; it reads GARHSAGASMQRNHTTIDNNNSTSSSPPDATITTTTTTTTTRS. Serine 808 carries the post-translational modification Phosphoserine. Composition is skewed to low complexity over residues 842–862 and 884–896; these read SNTP…QNSP and TTAT…GTGT. The FYVE-type zinc finger occupies 905 to 965; that stretch reads DGKAPRCMSC…VCRDCYAREI (61 aa). The Zn(2+) site is built by cysteine 911, cysteine 914, cysteine 927, cysteine 930, cysteine 935, cysteine 938, cysteine 957, and cysteine 960. Residues 968 to 993 are disordered; that stretch reads SGGGGGGVVQMQRQQAANRPQTASAS. Residues 978–993 show a composition bias toward polar residues; it reads MQRQQAANRPQTASAS.

Belongs to the lst-2 family.

Negative regulator of epidermal growth factor receptor (EGFR) signaling. The chain is Lateral signaling target protein 2 homolog from Drosophila willistoni (Fruit fly).